Here is a 330-residue protein sequence, read N- to C-terminus: uncharacterized protein (330 aa).

2 disordered regions span residues 136–160 (VPPSVNEPKPKTSQTTKPPSNDESS) and 172–314 (DNEK…SQFN). The segment covering 223-235 (PKPPAPPPPPPVP) has biased composition (pro residues). Positions 236–246 (ISMTPAAISVT) are enriched in low complexity. 3 stretches are compositionally biased toward polar residues: residues 263-276 (AQSTLPSVSSTTDE), 284-294 (TRSSSQSNSTV), and 304-314 (PASSPTFSQFN).

This is an uncharacterized protein from Danio rerio (Zebrafish).